Consider the following 267-residue polypeptide: MRLIPLQTSEQVSRWAARHIVERINRFQPTADRPFVLGLPTGGTPLQTYKELIRLYQAGEVSFQHVVTFNMDEYVGLPKEHPQSYHTFMYRNFFDHIDIQPQNINILNGNTEDHDAECRRYEEKIKSYGKIHLFMGGVGVDGHIAFNEPASSLGSRTRIKTLTEDTLIANSRFFDNDITKVPKYALTVGVATLLDAEEVMLLITGYNKALALQACVEGSVNHMWTVSALQLHKRGIVVCDEPATQELKVKTVKYFTQLETQAIQSVL.

Aspartate 72 functions as the Proton acceptor; for enolization step in the catalytic mechanism. Aspartate 141 functions as the For ring-opening step in the catalytic mechanism. Histidine 143 (proton acceptor; for ring-opening step) is an active-site residue. The active-site For ring-opening step is the glutamate 148.

Belongs to the glucosamine/galactosamine-6-phosphate isomerase family. NagB subfamily. In terms of assembly, homohexamer.

The catalysed reaction is alpha-D-glucosamine 6-phosphate + H2O = beta-D-fructose 6-phosphate + NH4(+). The protein operates within amino-sugar metabolism; N-acetylneuraminate degradation; D-fructose 6-phosphate from N-acetylneuraminate: step 5/5. Allosterically activated by N-acetylglucosamine 6-phosphate (GlcNAc6P). Its function is as follows. Catalyzes the reversible isomerization-deamination of glucosamine 6-phosphate (GlcN6P) to form fructose 6-phosphate (Fru6P) and ammonium ion. This is Glucosamine-6-phosphate deaminase from Actinobacillus pleuropneumoniae serotype 5b (strain L20).